The primary structure comprises 282 residues: Probable protein phosphatase 2C 45 (282 aa).

In terms of domain architecture, PPM-type phosphatase spans 27-272 (SYGYASSPGK…DNITCVVVRF (246 aa)). Positions 63, 64, 224, and 263 each coordinate Mn(2+).

The protein belongs to the PP2C family. Mg(2+) is required as a cofactor. The cofactor is Mn(2+).

The catalysed reaction is O-phospho-L-seryl-[protein] + H2O = L-seryl-[protein] + phosphate. It carries out the reaction O-phospho-L-threonyl-[protein] + H2O = L-threonyl-[protein] + phosphate. In Oryza sativa subsp. japonica (Rice), this protein is Probable protein phosphatase 2C 45.